The primary structure comprises 1551 residues: Pentafunctional AROM polypeptide (1551 aa).

The 3-dehydroquinate synthase stretch occupies residues 1-379 (MSIEKVPILG…YQLKAHQVSK (379 aa)). Residues 42–44 (DTN), 80–83 (ENNK), 111–113 (GGV), and Asp116 each bind NAD(+). Residue Arg127 coordinates 7-phospho-2-dehydro-3-deoxy-D-arabino-heptonate. 136-137 (TT) provides a ligand contact to NAD(+). 7-phospho-2-dehydro-3-deoxy-D-arabino-heptonate is bound by residues Asp143 and Lys149. NAD(+) is bound at residue Lys158. Position 159 (Asn159) interacts with 7-phospho-2-dehydro-3-deoxy-D-arabino-heptonate. NAD(+)-binding positions include 176–179 (FLET) and Asn187. Glu191 lines the Zn(2+) pocket. 7-phospho-2-dehydro-3-deoxy-D-arabino-heptonate contacts are provided by residues 191-194 (EVVK) and Lys243. The Proton acceptor; for 3-dehydroquinate synthase activity role is filled by Glu253. Residues 257-261 (RNLLN) and His264 each bind 7-phospho-2-dehydro-3-deoxy-D-arabino-heptonate. A Zn(2+)-binding site is contributed by His264. His268 (proton acceptor; for 3-dehydroquinate synthase activity) is an active-site residue. Residues His280 and Lys351 each coordinate 7-phospho-2-dehydro-3-deoxy-D-arabino-heptonate. His280 lines the Zn(2+) pocket. The segment at 392 to 838 (VHPFTNPPKE…WDILHSKFKI (447 aa)) is EPSP synthase. Positions 858–1048 (DKSIIVIGMR…VPAGRSAAVV (191 aa)) are shikimate kinase. Residue 865 to 872 (GMRGTGKS) participates in ATP binding. Residues 1049 to 1258 (LTSPDLNEVV…NDEEFLTIGE (210 aa)) form a 3-dehydroquinase region. Arg1194 functions as the Schiff-base intermediate with substrate; for 3-dehydroquinate dehydratase activity in the catalytic mechanism. A shikimate dehydrogenase region spans residues 1271–1551 (AKKFWVIGSP…EIIHRAVVEE (281 aa)).

It in the N-terminal section; belongs to the sugar phosphate cyclases superfamily. Dehydroquinate synthase family. The protein in the 2nd section; belongs to the EPSP synthase family. This sequence in the 3rd section; belongs to the shikimate kinase family. In the 4th section; belongs to the type-I 3-dehydroquinase family. It in the C-terminal section; belongs to the shikimate dehydrogenase family. In terms of assembly, homodimer. It depends on Zn(2+) as a cofactor.

The protein resides in the cytoplasm. It catalyses the reaction 7-phospho-2-dehydro-3-deoxy-D-arabino-heptonate = 3-dehydroquinate + phosphate. It carries out the reaction 3-dehydroquinate = 3-dehydroshikimate + H2O. The catalysed reaction is shikimate + NADP(+) = 3-dehydroshikimate + NADPH + H(+). The enzyme catalyses shikimate + ATP = 3-phosphoshikimate + ADP + H(+). It catalyses the reaction 3-phosphoshikimate + phosphoenolpyruvate = 5-O-(1-carboxyvinyl)-3-phosphoshikimate + phosphate. The protein operates within metabolic intermediate biosynthesis; chorismate biosynthesis; chorismate from D-erythrose 4-phosphate and phosphoenolpyruvate: step 2/7. Its pathway is metabolic intermediate biosynthesis; chorismate biosynthesis; chorismate from D-erythrose 4-phosphate and phosphoenolpyruvate: step 3/7. It functions in the pathway metabolic intermediate biosynthesis; chorismate biosynthesis; chorismate from D-erythrose 4-phosphate and phosphoenolpyruvate: step 4/7. It participates in metabolic intermediate biosynthesis; chorismate biosynthesis; chorismate from D-erythrose 4-phosphate and phosphoenolpyruvate: step 5/7. The protein operates within metabolic intermediate biosynthesis; chorismate biosynthesis; chorismate from D-erythrose 4-phosphate and phosphoenolpyruvate: step 6/7. Its function is as follows. The AROM polypeptide catalyzes 5 consecutive enzymatic reactions in prechorismate polyaromatic amino acid biosynthesis. This Candida albicans (strain SC5314 / ATCC MYA-2876) (Yeast) protein is Pentafunctional AROM polypeptide.